The sequence spans 309 residues: Elongation factor Ts (309 aa).

An involved in Mg(2+) ion dislocation from EF-Tu region spans residues Thr-82–Val-85.

Belongs to the EF-Ts family.

The protein localises to the cytoplasm. In terms of biological role, associates with the EF-Tu.GDP complex and induces the exchange of GDP to GTP. It remains bound to the aminoacyl-tRNA.EF-Tu.GTP complex up to the GTP hydrolysis stage on the ribosome. In Rickettsia felis (strain ATCC VR-1525 / URRWXCal2) (Rickettsia azadi), this protein is Elongation factor Ts.